The chain runs to 184 residues: ATP synthase subunit b, chloroplastic (184 aa).

A helical transmembrane segment spans residues 31–53 (LINLAVVIGVLVYFGKGVLTTIL).

This sequence belongs to the ATPase B chain family. F-type ATPases have 2 components, F(1) - the catalytic core - and F(0) - the membrane proton channel. F(1) has five subunits: alpha(3), beta(3), gamma(1), delta(1), epsilon(1). F(0) has four main subunits: a(1), b(1), b'(1) and c(10-14). The alpha and beta chains form an alternating ring which encloses part of the gamma chain. F(1) is attached to F(0) by a central stalk formed by the gamma and epsilon chains, while a peripheral stalk is formed by the delta, b and b' chains.

It localises to the plastid. The protein resides in the chloroplast thylakoid membrane. Its function is as follows. F(1)F(0) ATP synthase produces ATP from ADP in the presence of a proton or sodium gradient. F-type ATPases consist of two structural domains, F(1) containing the extramembraneous catalytic core and F(0) containing the membrane proton channel, linked together by a central stalk and a peripheral stalk. During catalysis, ATP synthesis in the catalytic domain of F(1) is coupled via a rotary mechanism of the central stalk subunits to proton translocation. Component of the F(0) channel, it forms part of the peripheral stalk, linking F(1) to F(0). The sequence is that of ATP synthase subunit b, chloroplastic from Staurastrum punctulatum (Green alga).